A 639-amino-acid polypeptide reads, in one-letter code: Probable potassium transport system protein Kup 1 (639 aa).

A compositionally biased stretch (polar residues) spans 1 to 16 (MALANTGSEAEPVEQS). The interval 1–21 (MALANTGSEAEPVEQSSHPEI) is disordered. 12 helical membrane passes run 29–49 (LMLG…IYAF), 67–87 (ILGV…IKYI), 117–137 (AVIL…AVIT), 154–174 (PTFQ…VFAV), 182–202 (VGLV…LSGL), 220–240 (IVAF…AIFL), 260–280 (IVLA…AGQG), 302–322 (ALIP…QAVI), 354–374 (IYMP…VVGF), 383–403 (AYGI…YVVM), 411–431 (LWVA…FFAS), and 436–456 (VFEG…GMWT).

Belongs to the HAK/KUP transporter (TC 2.A.72) family.

It is found in the cell inner membrane. It catalyses the reaction K(+)(in) + H(+)(in) = K(+)(out) + H(+)(out). Functionally, transport of potassium into the cell. Likely operates as a K(+):H(+) symporter. This Mesorhizobium japonicum (strain LMG 29417 / CECT 9101 / MAFF 303099) (Mesorhizobium loti (strain MAFF 303099)) protein is Probable potassium transport system protein Kup 1.